The primary structure comprises 35 residues: Photosystem II reaction center protein T (35 aa).

Residues 3-23 (ALVYTFLLVSTLGIIFFAIFF) form a helical membrane-spanning segment.

The protein belongs to the PsbT family. In terms of assembly, PSII is composed of 1 copy each of membrane proteins PsbA, PsbB, PsbC, PsbD, PsbE, PsbF, PsbH, PsbI, PsbJ, PsbK, PsbL, PsbM, PsbT, PsbY, PsbZ, Psb30/Ycf12, at least 3 peripheral proteins of the oxygen-evolving complex and a large number of cofactors. It forms dimeric complexes.

Its subcellular location is the plastid. It is found in the chloroplast thylakoid membrane. Functionally, found at the monomer-monomer interface of the photosystem II (PS II) dimer, plays a role in assembly and dimerization of PSII. PSII is a light-driven water plastoquinone oxidoreductase, using light energy to abstract electrons from H(2)O, generating a proton gradient subsequently used for ATP formation. This is Photosystem II reaction center protein T from Nelumbo lutea (American lotus).